The following is a 224-amino-acid chain: ATP synthase subunit a (224 aa).

6 consecutive transmembrane segments (helical) span residues 17–37, 78–98, 104–124, 136–156, 176–196, and 201–221; these read FIYMTHMLLAAGIALMLVKMA, LVATIGLFVGIANLIGVVPGF, FLEFAFTLALSVFIYYNYEGI, FLGPVWWLYWLMFPIEIVSHF, FLMVILMLAPWVLPMIPYALL, and FLQAFIFMMLTYVYLGSAIAV.

This sequence belongs to the ATPase A chain family. F-type ATPases have 2 components, CF(1) - the catalytic core - and CF(0) - the membrane proton channel. CF(1) has five subunits: alpha(3), beta(3), gamma(1), delta(1), epsilon(1). CF(0) has three main subunits: a(1), b(2) and c(9-12). The alpha and beta chains form an alternating ring which encloses part of the gamma chain. CF(1) is attached to CF(0) by a central stalk formed by the gamma and epsilon chains, while a peripheral stalk is formed by the delta and b chains.

Its subcellular location is the cell inner membrane. Its function is as follows. Key component of the proton channel; it plays a direct role in the translocation of protons across the membrane. This Sulfurimonas denitrificans (strain ATCC 33889 / DSM 1251) (Thiomicrospira denitrificans (strain ATCC 33889 / DSM 1251)) protein is ATP synthase subunit a.